An 869-amino-acid chain; its full sequence is MLEAYRKHVEERAAQGVVPQPLNAEQTAGLVELLKNPPAGEEEFLLDLITNRVPPGVDEAAYVKAGFLSAIVKGEATSPLIDKQRAAELLGTMQGGYNIATLVELLDDAELANTAAEQLKHTLLMFDAFHDVAERAKKGNAAAKSVLQSWADGEWFKAKPEVPEKLTLTVFKVPGETNTDDLSPAPDAWSRPDIPLHALAMLKMARDGIEPVQPGSVGPLKQIEAVKAKGFPVAYVGDVVGTGSSRKSATNSVLWFFGDDIPFVPNKRAGGFCFGTKIAPIFYNTMEDAGALPIEFDCTNLAMGDVIDVYPYEGKVVRHDSGEVVTTFELKTPVLLDEVRAGGRIPLIVGRGLTEKARAELGLGASDLFRKPEAPADSGKGFTLAQKMVGRACGLPEGQGVRPGTYCEPKMTTVGSQDTTGPMTRDELKDLACLGFSADLVMQSFCHTAAYPKPIDVKTHHTLPDFIMTRGGVSLRPGDGIIHSWLNRMLLPDTVGTGGDSHTRFPIGISFPAGSGLVAFAAATGVMPLDMPESVLVRFKGKLQPGITLRDLVHAIPYYAIQQGLLTVEKKGKKNIFSGRILEIEGLNDLTVEQAFELSDASAERSAAGCTIKLPEQAIAEYLKSNITLLRWMIGEGYGDPRTLERRAQAMEAWLAKPELLEADKDAEYAAVIEIDLADVKEPVLCAPNDPDDARLLSSVQGRKIDEVFIGSCMTNIGHFRAAGKLLDKVKGGIPTRLWLAPPTKMDAHQLTEEGYYGIYGKAGARMEMPGCSLCMGNQARVQTGSTVVSTSTRNFPNRLGDATDVFLASAELAAVSSILGKLPTVEEYMAYAKDIDSMAADVYRYLSFDQIAEFREAAANAKIPVVQA.

Substrate contacts are provided by residues Arg-191, 244-246 (SSR), 417-419 (QDT), and Ser-501. Residues Cys-713, Cys-772, and Cys-775 each contribute to the [4Fe-4S] cluster site. Substrate-binding residues include Arg-794 and Arg-799.

Belongs to the aconitase/IPM isomerase family. In terms of assembly, monomer. [4Fe-4S] cluster is required as a cofactor.

The catalysed reaction is citrate = D-threo-isocitrate. It catalyses the reaction (2S,3R)-3-hydroxybutane-1,2,3-tricarboxylate = 2-methyl-cis-aconitate + H2O. It participates in carbohydrate metabolism; tricarboxylic acid cycle; isocitrate from oxaloacetate: step 2/2. The protein operates within organic acid metabolism; propanoate degradation. Involved in the catabolism of short chain fatty acids (SCFA) via the tricarboxylic acid (TCA)(acetyl degradation route) and probably via the 2-methylcitrate cycle I (propionate degradation route). Catalyzes the reversible isomerization of citrate to isocitrate via cis-aconitate. Catalyzes the hydration of 2-methyl-cis-aconitate to yield (2R,3S)-2-methylisocitrate. The apo form of AcnB functions as a RNA-binding regulatory protein. This is Aconitate hydratase B (acnB) from Pseudomonas aeruginosa (strain ATCC 15692 / DSM 22644 / CIP 104116 / JCM 14847 / LMG 12228 / 1C / PRS 101 / PAO1).